Here is a 355-residue protein sequence, read N- to C-terminus: Methionine import ATP-binding protein MetN (355 aa).

Positions 8–250 constitute an ABC transporter domain; that stretch reads LKNIDITFTQ…PQEDLTQEFI (243 aa). ATP is bound at residue 42–49; the sequence is GYSGAGKS.

This sequence belongs to the ABC transporter superfamily. Methionine importer (TC 3.A.1.24) family. As to quaternary structure, the complex is composed of two ATP-binding proteins (MetN), two transmembrane proteins (MetI) and a solute-binding protein (MetQ).

The protein resides in the cell membrane. The enzyme catalyses L-methionine(out) + ATP + H2O = L-methionine(in) + ADP + phosphate + H(+). It catalyses the reaction D-methionine(out) + ATP + H2O = D-methionine(in) + ADP + phosphate + H(+). Part of the ABC transporter complex MetNIQ involved in methionine import. Responsible for energy coupling to the transport system. In Streptococcus thermophilus (strain CNRZ 1066), this protein is Methionine import ATP-binding protein MetN.